The following is a 374-amino-acid chain: Occlusion-derived virus envelope protein E56 (374 aa).

A helical membrane pass occupies residues 155–175 (AGVGVLLAGGAYLTFSAATLV). A glycan (N-linked (GlcNAc...) asparagine; by host) is linked at Asn-183. A helical membrane pass occupies residues 319 to 339 (LMPLIWLIGAVLFLALVVYLI). The disordered stretch occupies residues 355–374 (PPVVIVPPPATTNLNPQQQI).

The protein belongs to the baculoviridae E56 family.

The protein resides in the virion membrane. Structural protein that is specific for occlusion-derived virus (ODV) envelopes but not of budded virus (BV). The protein is Occlusion-derived virus envelope protein E56 (ODVP6E) of Orgyia pseudotsugata (Douglas-fir tussock moth).